Consider the following 231-residue polypeptide: Cytidylate kinase (231 aa).

Residue Gly11 to Thr19 coordinates ATP.

This sequence belongs to the cytidylate kinase family. Type 1 subfamily.

It is found in the cytoplasm. The enzyme catalyses CMP + ATP = CDP + ADP. The catalysed reaction is dCMP + ATP = dCDP + ADP. This chain is Cytidylate kinase, found in Porphyromonas gingivalis (strain ATCC BAA-308 / W83).